We begin with the raw amino-acid sequence, 137 residues long: ATP synthase epsilon chain, chloroplastic (137 aa).

Belongs to the ATPase epsilon chain family. As to quaternary structure, F-type ATPases have 2 components, CF(1) - the catalytic core - and CF(0) - the membrane proton channel. CF(1) has five subunits: alpha(3), beta(3), gamma(1), delta(1), epsilon(1). CF(0) has three main subunits: a, b and c.

The protein resides in the plastid. Its subcellular location is the chloroplast thylakoid membrane. Produces ATP from ADP in the presence of a proton gradient across the membrane. This Agrostis stolonifera (Creeping bentgrass) protein is ATP synthase epsilon chain, chloroplastic.